The following is a 284-amino-acid chain: Bifunctional protein FolD (284 aa).

Residues 166 to 168 (GAS) and Ile232 contribute to the NADP(+) site.

Belongs to the tetrahydrofolate dehydrogenase/cyclohydrolase family. In terms of assembly, homodimer.

It carries out the reaction (6R)-5,10-methylene-5,6,7,8-tetrahydrofolate + NADP(+) = (6R)-5,10-methenyltetrahydrofolate + NADPH. The catalysed reaction is (6R)-5,10-methenyltetrahydrofolate + H2O = (6R)-10-formyltetrahydrofolate + H(+). Its pathway is one-carbon metabolism; tetrahydrofolate interconversion. Catalyzes the oxidation of 5,10-methylenetetrahydrofolate to 5,10-methenyltetrahydrofolate and then the hydrolysis of 5,10-methenyltetrahydrofolate to 10-formyltetrahydrofolate. This chain is Bifunctional protein FolD, found in Alteromonas mediterranea (strain DSM 17117 / CIP 110805 / LMG 28347 / Deep ecotype).